We begin with the raw amino-acid sequence, 331 residues long: ADP-L-glycero-D-manno-heptose-6-epimerase (331 aa).

NADP(+) contacts are provided by residues 11 to 12, 32 to 33, Lys39, Lys54, 75 to 79, and Asn92; these read FI, DN, and EGACS. Catalysis depends on Tyr139, which acts as the Proton acceptor. Lys143 is a binding site for NADP(+). Residue Asn168 participates in substrate binding. NADP(+) is bound by residues Val169 and Lys177. Catalysis depends on Lys177, which acts as the Proton acceptor. Residues Arg179, His186, 200-203, Arg213, and Tyr292 contribute to the substrate site; that span reads FGEY.

The protein belongs to the NAD(P)-dependent epimerase/dehydratase family. HldD subfamily. As to quaternary structure, homopentamer. NADP(+) serves as cofactor.

The enzyme catalyses ADP-D-glycero-beta-D-manno-heptose = ADP-L-glycero-beta-D-manno-heptose. It participates in nucleotide-sugar biosynthesis; ADP-L-glycero-beta-D-manno-heptose biosynthesis; ADP-L-glycero-beta-D-manno-heptose from D-glycero-beta-D-manno-heptose 7-phosphate: step 4/4. Functionally, catalyzes the interconversion between ADP-D-glycero-beta-D-manno-heptose and ADP-L-glycero-beta-D-manno-heptose via an epimerization at carbon 6 of the heptose. The sequence is that of ADP-L-glycero-D-manno-heptose-6-epimerase from Ralstonia pickettii (strain 12J).